Reading from the N-terminus, the 330-residue chain is CRISPR-associated endonuclease Cas1 (330 aa).

The Mn(2+) site is built by E154, H222, and E237.

This sequence belongs to the CRISPR-associated endonuclease Cas1 family. As to quaternary structure, homodimer, forms a heterotetramer with a Cas2 homodimer. Mg(2+) is required as a cofactor. It depends on Mn(2+) as a cofactor.

Its function is as follows. CRISPR (clustered regularly interspaced short palindromic repeat), is an adaptive immune system that provides protection against mobile genetic elements (viruses, transposable elements and conjugative plasmids). CRISPR clusters contain spacers, sequences complementary to antecedent mobile elements, and target invading nucleic acids. CRISPR clusters are transcribed and processed into CRISPR RNA (crRNA). Acts as a dsDNA endonuclease. Involved in the integration of spacer DNA into the CRISPR cassette. The sequence is that of CRISPR-associated endonuclease Cas1 from Clostridium perfringens (strain SM101 / Type A).